We begin with the raw amino-acid sequence, 238 residues long: Sugar fermentation stimulation protein homolog (238 aa).

It belongs to the SfsA family.

In Brucella melitensis biotype 1 (strain ATCC 23456 / CCUG 17765 / NCTC 10094 / 16M), this protein is Sugar fermentation stimulation protein homolog.